We begin with the raw amino-acid sequence, 180 residues long: Prorelaxin (180 aa).

An N-terminal signal peptide occupies residues 1–25; sequence MLRLFLSHLLGVWLLLSLRARKIPA. Cystine bridges form between Cys33–Cys167, Cys45–Cys180, and Cys166–Cys171. Positions 53–154 are cleaved as a propeptide — connecting peptide; that stretch reads SSQQHREPRQ…RSRLDAHSRI (102 aa).

It belongs to the insulin family. Heterodimer of a B chain and an A chain linked by two disulfide bonds. In terms of tissue distribution, expressed by the placenta. Exclusively detected in cells located in the lamellar placental labyrinth and absent from other placental and non-placental uterine parts.

The protein resides in the secreted. Its function is as follows. Relaxin is an ovarian hormone that acts with estrogen to produce dilatation of the birth canal in many mammals. In Felis catus (Cat), this protein is Prorelaxin (RLN).